The chain runs to 787 residues: Alpha-glucosidase 2 (787 aa).

Active-site residues include D407 and E410. D484 functions as the Proton donor in the catalytic mechanism.

Belongs to the glycosyl hydrolase 31 family. Homohexamer.

The enzyme catalyses Hydrolysis of terminal, non-reducing (1-&gt;4)-linked alpha-D-glucose residues with release of alpha-D-glucose.. In Bacillus thermoamyloliquefaciens, this protein is Alpha-glucosidase 2.